The primary structure comprises 362 residues: MGQMDGGDGGGGGHPYHYQALLAAVHQQTVPFPNPFPAPSSGAEPPHPHNHNHNHNHNHNIHNSHNHNHNHNAAPHPCHTPTPTPTPRGFADWSASTSAFTSLAAHSSTAPSNAVHYSFSPCYAFWTHYMLNKNAYPTSFPAPHDDHLRLANNNHPRDAPGPASSYGVESFTSPSMAPNICTHMPPIEGPISAKEDKKPEILPRVVKSSDELETRNSNVEFHSETVGTLPESKQGHDSRATKLLNSGEYQVILRKELTKSDVGNVGRIVLPKKDAEASLPPLLQRDPLILHMDDMVLPVTWKFKYRYWPNNKSRMYILDSAGEFLKTHGLQAGDVIIIYKNLAPGKFIIRGEKAIHQQTTNP.

Positions 30 to 91 are disordered; the sequence is VPFPNPFPAP…TPTPTPRGFA (62 aa). Basic residues predominate over residues 48–70; it reads PHNHNHNHNHNHNIHNSHNHNHN. The TF-B3 DNA-binding region spans 253–355; sequence LRKELTKSDV…KFIIRGEKAI (103 aa).

In terms of processing, polyubiquitinated. Ubiquitination leads to its subsequent degradation via the proteasome pathway. As to expression, expressed in roots.

Its subcellular location is the nucleus. Transcription regulator involved in iron deficiency response and tolerance. May regulate directly iron transporters or other transcription factors involved in iron-deficiency response. Binds specifically to the DNA sequence 5'-CATGC-3' of the IDE1 element found in the promoter of the barley iron deficiency-inducible gene IDS2. This chain is B3 domain-containing protein IDEF1 (IDEF1), found in Oryza sativa subsp. japonica (Rice).